The sequence spans 276 residues: 2-dehydro-3-deoxyphosphooctonate aldolase (276 aa).

Belongs to the KdsA family.

It is found in the cytoplasm. The enzyme catalyses D-arabinose 5-phosphate + phosphoenolpyruvate + H2O = 3-deoxy-alpha-D-manno-2-octulosonate-8-phosphate + phosphate. It participates in carbohydrate biosynthesis; 3-deoxy-D-manno-octulosonate biosynthesis; 3-deoxy-D-manno-octulosonate from D-ribulose 5-phosphate: step 2/3. The protein operates within bacterial outer membrane biogenesis; lipopolysaccharide biosynthesis. This is 2-dehydro-3-deoxyphosphooctonate aldolase from Xanthomonas euvesicatoria pv. vesicatoria (strain 85-10) (Xanthomonas campestris pv. vesicatoria).